The following is a 229-amino-acid chain: Probable transmembrane reductase CYB561D1 (229 aa).

The Cytoplasmic portion of the chain corresponds to 1-24 (MQPLEVGLVPAPAGEPRLTRWLRR). Residues 22–224 (LRRGSGILAH…HQISRSYLPR (203 aa)) form the Cytochrome b561 domain. The helical transmembrane segment at 25–45 (GSGILAHLVALGFTIFLTALS) threads the bilayer. Residues 46-53 (RPGTSLFS) lie on the Lumenal side of the membrane. Residues 54 to 74 (WHPVFMALAFCLCMAEAILLF) traverse the membrane as a helical segment. His55 contacts heme b. Over 75-91 (SPEHSLFFFCSRKARIR) the chain is Cytoplasmic. The helical transmembrane segment at 92 to 112 (LHWAGQTLAILCAALGLGFII) threads the bilayer. Positions 93 and 127 each coordinate heme b. At 113 to 128 (SSRTRSELPHLVSWHS) the chain is on the lumenal side. The chain crosses the membrane as a helical span at residues 129–149 (WVGALTLLATAVQALCGLCLL). At 150-169 (CPRAARVSRVARLKLYHLTC) the chain is on the cytoplasmic side. Heme b is bound at residue His166. A helical membrane pass occupies residues 170 to 190 (GLVVYLMATVTVLLGMYSVWF). Residues 191-193 (QAQ) lie on the Lumenal side of the membrane. Residues 194–214 (IKGAAWYLCLALPVYPALVIM) traverse the membrane as a helical segment. At 215 to 229 (HQISRSYLPRKKMEM) the chain is on the cytoplasmic side.

It depends on heme b as a cofactor.

It is found in the membrane. The catalysed reaction is monodehydro-L-ascorbate radical(out) + L-ascorbate(in) = monodehydro-L-ascorbate radical(in) + L-ascorbate(out). The enzyme catalyses Fe(3+)(out) + L-ascorbate(in) = monodehydro-L-ascorbate radical(in) + Fe(2+)(out) + H(+). Functionally, probable transmembrane reductase that may use ascorbate as an electron donor and transfer electrons across membranes to reduce monodehydro-L-ascorbate radical and iron cations Fe(3+) in another cellular compartment. This is Probable transmembrane reductase CYB561D1 from Homo sapiens (Human).